Consider the following 365-residue polypeptide: MSTAVTITAPSVKHILLDSLVVMKIVKHVDSELHAGISEVSGDACAGVLTGLVFLEDSRLEITNCFPTVRNEPVIDDDANAAQQYEEQKQQEMLDMLRKFRTMNIDYEIVGFYQSHQFGAGFSHDLVESMFDYQAMGPENVVLIYDPIKTRQGQLSIRAWRLSTAALDLASKNDWRPELVKSAGLTYQNMFEELPIIIKSSYLNNVLMSELALSKSYSSDKYSTRHFDLGSKKSLEKSVRAMMANVDELNKSIQSLTKYTIDKQRHDNMVFSLTQKRQQENESRLARGDPPLPMDDIKRIKAPQLQTRNGLLDELLASFDTNALADFSKTVTSENITKLFIAEAVAEEKVVGTKDRTLSSVSSTR.

Positions 15–166 (ILLDSLVVMK…IRAWRLSTAA (152 aa)) constitute an MPN domain. Residues 276 to 295 (KRQQENESRLARGDPPLPMD) are disordered. The segment covering 277–287 (RQQENESRLAR) has biased composition (basic and acidic residues).

It belongs to the eIF-3 subunit H family. As to quaternary structure, component of the eukaryotic translation initiation factor 3 (eIF-3) complex.

It localises to the cytoplasm. Its function is as follows. Component of the eukaryotic translation initiation factor 3 (eIF-3) complex, which is involved in protein synthesis of a specialized repertoire of mRNAs and, together with other initiation factors, stimulates binding of mRNA and methionyl-tRNAi to the 40S ribosome. The eIF-3 complex specifically targets and initiates translation of a subset of mRNAs involved in cell proliferation. The polypeptide is Eukaryotic translation initiation factor 3 subunit H (Caenorhabditis briggsae).